The primary structure comprises 522 residues: Target of rapamycin complex 2 subunit MAPKAP1 (522 aa).

Ala2 bears the N-acetylalanine mark. The interval Ala2 to His184 is interaction with MAP3K2. The segment at Ala2 to Lys267 is interaction with NBN. The interval Leu38 to Gly59 is disordered. Thr86 carries the post-translational modification Phosphothreonine. Phosphoserine is present on residues Ser128, Ser186, Ser315, and Ser356. Positions Gln139–Lys267 constitute a CRIM domain. The segment at Leu279–Arg353 is SIN1-type RBD. Residues His382–Glu487 form the SIN1-type PH domain. Arg393 contributes to the a 1,2-diacyl-sn-glycero-3-phospho-(1D-myo-inositol-3,4,5-trisphosphate) binding site. Thr398 is subject to Phosphothreonine. A 1,2-diacyl-sn-glycero-3-phospho-(1D-myo-inositol-3,4,5-trisphosphate)-binding residues include Lys428 and Lys464. Positions Phe468–Gln522 are interaction with ATF2. A Phosphoserine modification is found at Ser510.

This sequence belongs to the SIN1 family. As to quaternary structure, component of the mechanistic target of rapamycin complex 2 (mTORC2), consisting in two heterotretramers composed of MTOR, MLST8, RICTOR and MAPKAP1/SIN1. The mTORC2 core complex associates with PRR5/PROTOR1 and/or PRR5L/PROTOR2. Contrary to mTORC1, mTORC2 does not bind to and is not sensitive to FKBP12-rapamycin. Interacts with MAP3K2. Interacts with ATF2. Interacts with MAPK8. Interacts with GTP-bound HRAS and KRAS; inhibiting their activity. Interacts with IFNAR2. Post-translationally, phosphorylation at Ser-128 by PKC promotes relocalization to the perinuclear region, where the mTORC2 complex specifically mediates phosphorylation of SGK1. Phosphorylated at Thr-86 by AKT1 or RPS6KB1 in the presence of growth factors; the effect of this phosphorylation is however unclear. According to two studies, phosphorylation at Thr-86 by AKT1 is part of a positive feedback loop that increases mTORC2 activation. According to another study, phosphorylation at Thr-86 and Thr-398 by RPS6KB1 promotes dissociation from the mTORC2 complex, leading to inhibit mTORC2 signaling.

The protein resides in the cell membrane. It is found in the endoplasmic reticulum membrane. It localises to the early endosome membrane. Its subcellular location is the late endosome membrane. The protein localises to the lysosome membrane. The protein resides in the golgi apparatus membrane. It is found in the mitochondrion outer membrane. It localises to the cytoplasm. Its subcellular location is the perinuclear region. The protein localises to the nucleus. Its activity is regulated as follows. Phosphatidylinositol 3,4,5-trisphosphate (PI(3,4,5)P3) promotes MTOR activation by relieving MAPKAP1/SIN1-mediated inhibition of MTOR that takes place in absence of PI(3,4,5)P3. Its function is as follows. Component of the mechanistic target of rapamycin complex 2 (mTORC2), which transduces signals from growth factors to pathways involved in proliferation, cytoskeletal organization, lipogenesis and anabolic output. In response to growth factors, mTORC2 phosphorylates and activates AGC protein kinase family members, including AKT (AKT1, AKT2 and AKT3), PKC (PRKCA, PRKCB and PRKCE) and SGK1. In contrast to mTORC1, mTORC2 is nutrient-insensitive. Within the mTORC2 complex, MAPKAP1/SIN1 acts as a substrate adapter which recognizes and binds AGC protein kinase family members for phosphorylation by MTOR. mTORC2 plays a critical role in AKT1 activation by mediating phosphorylation of different sites depending on the context, such as 'Thr-450', 'Ser-473', 'Ser-477' or 'Thr-479', facilitating the phosphorylation of the activation loop of AKT1 on 'Thr-308' by PDPK1/PDK1 which is a prerequisite for full activation. mTORC2 catalyzes the phosphorylation of SGK1 at 'Ser-422' and of PRKCA on 'Ser-657'. The mTORC2 complex also phosphorylates various proteins involved in insulin signaling, such as FBXW8 and IGF2BP1. mTORC2 acts upstream of Rho GTPases to regulate the actin cytoskeleton, probably by activating one or more Rho-type guanine nucleotide exchange factors. mTORC2 promotes the serum-induced formation of stress-fibers or F-actin. MAPKAP1 inhibits MAP3K2 by preventing its dimerization and autophosphorylation. Inhibits HRAS and KRAS independently of mTORC2 complex. Enhances osmotic stress-induced phosphorylation of ATF2 and ATF2-mediated transcription. Involved in ciliogenesis, regulates cilia length through its interaction with CCDC28B independently of mTORC2 complex. The sequence is that of Target of rapamycin complex 2 subunit MAPKAP1 from Rattus norvegicus (Rat).